A 273-amino-acid chain; its full sequence is Dermonecrotic toxin LapSicTox-alphaIB1aiii (273 aa).

The active site involves histidine 5. Mg(2+)-binding residues include glutamate 25 and aspartate 27. Residue histidine 41 is the Nucleophile of the active site. 2 disulfide bridges follow: cysteine 45–cysteine 51 and cysteine 47–cysteine 190. Mg(2+) is bound at residue aspartate 85. An N-linked (GlcNAc...) asparagine glycan is attached at asparagine 250.

The protein belongs to the arthropod phospholipase D family. Class II subfamily. Requires Mg(2+) as cofactor. As to expression, expressed by the venom gland.

The protein localises to the secreted. It carries out the reaction an N-(acyl)-sphingosylphosphocholine = an N-(acyl)-sphingosyl-1,3-cyclic phosphate + choline. It catalyses the reaction an N-(acyl)-sphingosylphosphoethanolamine = an N-(acyl)-sphingosyl-1,3-cyclic phosphate + ethanolamine. The catalysed reaction is a 1-acyl-sn-glycero-3-phosphocholine = a 1-acyl-sn-glycero-2,3-cyclic phosphate + choline. The enzyme catalyses a 1-acyl-sn-glycero-3-phosphoethanolamine = a 1-acyl-sn-glycero-2,3-cyclic phosphate + ethanolamine. Dermonecrotic toxins cleave the phosphodiester linkage between the phosphate and headgroup of certain phospholipids (sphingolipid and lysolipid substrates), forming an alcohol (often choline) and a cyclic phosphate. This toxin acts on sphingomyelin (SM). It may also act on ceramide phosphoethanolamine (CPE), lysophosphatidylcholine (LPC) and lysophosphatidylethanolamine (LPE), but not on lysophosphatidylserine (LPS), and lysophosphatidylglycerol (LPG). It acts by transphosphatidylation, releasing exclusively cyclic phosphate products as second products. Induces dermonecrosis, hemolysis, increased vascular permeability, edema, inflammatory response, and platelet aggregation. This is Dermonecrotic toxin LapSicTox-alphaIB1aiii from Loxosceles apachea (Apache recluse spider).